We begin with the raw amino-acid sequence, 439 residues long: Probable aspartic-type endopeptidase AFUA_3G01220 (439 aa).

The first 20 residues, 1–20, serve as a signal peptide directing secretion; it reads MHFSIGSLFLYLIASASCTA. Residues 31-50 are disordered; that stretch reads RTPFTTSTSKPSAFTNPSTD. The segment covering 32–45 has biased composition (low complexity); sequence TPFTTSTSKPSAFT. The Peptidase A1 domain occupies 95 to 436; the sequence is FATSINIGNQ…DVGAAEMRFA (342 aa). The N-linked (GlcNAc...) asparagine glycan is linked to N103. D111 is a catalytic residue. N149, N178, N187, N253, N256, N276, and N308 each carry an N-linked (GlcNAc...) asparagine glycan. Residue D323 is part of the active site. Residues N361 and N394 are each glycosylated (N-linked (GlcNAc...) asparagine).

The protein belongs to the peptidase A1 family.

It localises to the secreted. Functionally, probable aspartic-type endopeptidase which contributes to virulence. The polypeptide is Probable aspartic-type endopeptidase AFUA_3G01220 (Aspergillus fumigatus (strain ATCC MYA-4609 / CBS 101355 / FGSC A1100 / Af293) (Neosartorya fumigata)).